The chain runs to 305 residues: Acetylglutamate kinase (305 aa).

Residues 67 to 68, Arg-89, and Asn-190 contribute to the substrate site; that span reads GG.

The protein belongs to the acetylglutamate kinase family. ArgB subfamily.

It localises to the cytoplasm. It catalyses the reaction N-acetyl-L-glutamate + ATP = N-acetyl-L-glutamyl 5-phosphate + ADP. It participates in amino-acid biosynthesis; L-arginine biosynthesis; N(2)-acetyl-L-ornithine from L-glutamate: step 2/4. In terms of biological role, catalyzes the ATP-dependent phosphorylation of N-acetyl-L-glutamate. This chain is Acetylglutamate kinase, found in Bifidobacterium animalis subsp. lactis (strain AD011).